A 391-amino-acid polypeptide reads, in one-letter code: DNA-directed RNA polymerase subunit Rpo1C (391 aa).

The protein belongs to the RNA polymerase beta' chain family. Part of the RNA polymerase complex.

It is found in the cytoplasm. It carries out the reaction RNA(n) + a ribonucleoside 5'-triphosphate = RNA(n+1) + diphosphate. In terms of biological role, DNA-dependent RNA polymerase (RNAP) catalyzes the transcription of DNA into RNA using the four ribonucleoside triphosphates as substrates. Forms part of the jaw domain. The polypeptide is DNA-directed RNA polymerase subunit Rpo1C (Thermococcus onnurineus (strain NA1)).